The sequence spans 349 residues: Glycerol-3-phosphate dehydrogenase [NAD(P)+] (349 aa).

NADPH contacts are provided by tryptophan 16, arginine 36, and lysine 110. The sn-glycerol 3-phosphate site is built by lysine 110, glycine 138, and threonine 140. Alanine 142 lines the NADPH pocket. Lysine 193, aspartate 246, serine 256, arginine 257, and asparagine 258 together coordinate sn-glycerol 3-phosphate. Lysine 193 (proton acceptor) is an active-site residue. Arginine 257 provides a ligand contact to NADPH. 2 residues coordinate NADPH: valine 281 and glutamate 283.

Belongs to the NAD-dependent glycerol-3-phosphate dehydrogenase family.

The protein resides in the cytoplasm. It carries out the reaction sn-glycerol 3-phosphate + NAD(+) = dihydroxyacetone phosphate + NADH + H(+). It catalyses the reaction sn-glycerol 3-phosphate + NADP(+) = dihydroxyacetone phosphate + NADPH + H(+). The protein operates within membrane lipid metabolism; glycerophospholipid metabolism. In terms of biological role, catalyzes the reduction of the glycolytic intermediate dihydroxyacetone phosphate (DHAP) to sn-glycerol 3-phosphate (G3P), the key precursor for phospholipid synthesis. In Rhodospirillum rubrum (strain ATCC 11170 / ATH 1.1.1 / DSM 467 / LMG 4362 / NCIMB 8255 / S1), this protein is Glycerol-3-phosphate dehydrogenase [NAD(P)+].